The following is a 93-amino-acid chain: Cytochrome c oxidase polypeptide 6, mitochondrial (93 aa).

The Mitochondrial matrix segment spans residues 2-33 (STGNESYNLRYPKGFKGYPYNMYKLEGYGTPK). The helical transmembrane segment at 34 to 53 (GYITLIGVVATLTVSGLFFA) threads the bilayer. Residues 54–93 (KTRSNKREYPTHNKEWRAKTLAYAKETNADPIYQLPKDKI) lie on the Mitochondrial intermembrane side of the membrane.

The protein belongs to the cytochrome c oxidase IV family. In terms of assembly, component of the cytochrome c oxidase (complex IV, CIV), a multisubunit enzyme composed of a catalytic core of 3 subunits and seevral supernumerary subunits. The complex exists as a monomer or a dimer and forms supercomplexes (SCs) in the inner mitochondrial membrane with ubiquinol-cytochrome c oxidoreductase (cytochrome b-c1 complex, complex III, CIII).

It localises to the mitochondrion inner membrane. Its pathway is energy metabolism; oxidative phosphorylation. Its function is as follows. Component of the cytochrome c oxidase, the last enzyme in the mitochondrial electron transport chain which drives oxidative phosphorylation. The respiratory chain contains 3 multisubunit complexes succinate dehydrogenase (complex II, CII), ubiquinol-cytochrome c oxidoreductase (cytochrome b-c1 complex, complex III, CIII) and cytochrome c oxidase (complex IV, CIV), that cooperate to transfer electrons derived from NADH and succinate to molecular oxygen, creating an electrochemical gradient over the inner membrane that drives transmembrane transport and the ATP synthase. Cytochrome c oxidase is the component of the respiratory chain that catalyzes the reduction of oxygen to water. Electrons originating from reduced cytochrome c in the intermembrane space (IMS) are transferred via the dinuclear copper A center (CU(A)) of subunit 2 and heme A of subunit 1 to the active site in subunit 1, a binuclear center (BNC) formed by heme A3 and copper B (CU(B)). The BNC reduces molecular oxygen to 2 water molecules using 4 electrons from cytochrome c in the IMS and 4 protons from the mitochondrial matrix. This is Cytochrome c oxidase polypeptide 6, mitochondrial (cxfA) from Dictyostelium discoideum (Social amoeba).